A 295-amino-acid chain; its full sequence is Defective in cullin neddylation protein 1 (295 aa).

Positions Gln-8–Phe-45 constitute a UBA-like domain. In terms of domain architecture, DCUN1 spans Val-60–Arg-272.

In terms of assembly, interacts with the cullin cul-3. Interacts with ubiquitin via its UBA-like domain. Interacts with ned-8/nedd8.

The protein resides in the nucleus. Required for neddylation of cullin components of SCF-type E3 ubiquitin ligase complexes. Neddylation of cullins play an essential role in the regulation of SCF-type complexes activity. Does not act by preventing deneddylation, but rather facilitates neddylation, possibly by acting with rbx-1 to recruit the Nedd8-charged E2 enzyme to the cullin component of SCF-type complexes. In Caenorhabditis elegans, this protein is Defective in cullin neddylation protein 1 (dcn-1).